The primary structure comprises 316 residues: 4-hydroxy-3-methylbut-2-enyl diphosphate reductase (316 aa).

[4Fe-4S] cluster is bound at residue Cys18. 2 residues coordinate (2E)-4-hydroxy-3-methylbut-2-enyl diphosphate: His47 and His80. Residues His47 and His80 each coordinate dimethylallyl diphosphate. 2 residues coordinate isopentenyl diphosphate: His47 and His80. Cys102 lines the [4Fe-4S] cluster pocket. Residue His130 coordinates (2E)-4-hydroxy-3-methylbut-2-enyl diphosphate. His130 serves as a coordination point for dimethylallyl diphosphate. His130 contributes to the isopentenyl diphosphate binding site. Glu132 functions as the Proton donor in the catalytic mechanism. Thr171 provides a ligand contact to (2E)-4-hydroxy-3-methylbut-2-enyl diphosphate. Cys201 contributes to the [4Fe-4S] cluster binding site. Positions 229, 230, 231, and 274 each coordinate (2E)-4-hydroxy-3-methylbut-2-enyl diphosphate. Residues Ser229, Ser230, Asn231, and Ser274 each coordinate dimethylallyl diphosphate. Isopentenyl diphosphate contacts are provided by Ser229, Ser230, Asn231, and Ser274.

Belongs to the IspH family. [4Fe-4S] cluster is required as a cofactor.

It catalyses the reaction isopentenyl diphosphate + 2 oxidized [2Fe-2S]-[ferredoxin] + H2O = (2E)-4-hydroxy-3-methylbut-2-enyl diphosphate + 2 reduced [2Fe-2S]-[ferredoxin] + 2 H(+). It carries out the reaction dimethylallyl diphosphate + 2 oxidized [2Fe-2S]-[ferredoxin] + H2O = (2E)-4-hydroxy-3-methylbut-2-enyl diphosphate + 2 reduced [2Fe-2S]-[ferredoxin] + 2 H(+). The protein operates within isoprenoid biosynthesis; dimethylallyl diphosphate biosynthesis; dimethylallyl diphosphate from (2E)-4-hydroxy-3-methylbutenyl diphosphate: step 1/1. It functions in the pathway isoprenoid biosynthesis; isopentenyl diphosphate biosynthesis via DXP pathway; isopentenyl diphosphate from 1-deoxy-D-xylulose 5-phosphate: step 6/6. Catalyzes the conversion of 1-hydroxy-2-methyl-2-(E)-butenyl 4-diphosphate (HMBPP) into a mixture of isopentenyl diphosphate (IPP) and dimethylallyl diphosphate (DMAPP). Acts in the terminal step of the DOXP/MEP pathway for isoprenoid precursor biosynthesis. In Ruegeria sp. (strain TM1040) (Silicibacter sp.), this protein is 4-hydroxy-3-methylbut-2-enyl diphosphate reductase.